The sequence spans 368 residues: Proton-coupled zinc antiporter SLC30A8 (368 aa).

Residues 1–78 (MEFLERTYLV…AKWRLCAASA (78 aa)) are Cytoplasmic-facing. Residues His51, Cys52, and His53 each contribute to the Zn(2+) site. The HCH Motif; seals regulatory zinc-binding pocket signature appears at 51–53 (HCH). Residues 79-99 (ICFFFMVAEVVGGHVAGSLAV) traverse the membrane as a helical segment. Residues 100–102 (LTD) are Lumenal, vesicle-facing. The chain crosses the membrane as a helical span at residues 103 to 123 (AAHLLIDLTSFLLSLFSLWLS). Residues His105 and Asp109 each contribute to the Zn(2+) site. Residues 124 to 139 (SRPPSKRLTFGWYRAE) are Cytoplasmic-facing. The helical transmembrane segment at 140–160 (ILGALLSVLCIWVVTGVLVYL) threads the bilayer. Over 161 to 174 (ACERLLYPDYQIQA) the chain is Lumenal, vesicle. The chain crosses the membrane as a helical span at residues 175–195 (GIMITVSGCAVAANIVLTLIL). At 196–216 (HQRHLGHNHKDAQANASVRAA) the chain is on the cytoplasmic side. A helical transmembrane segment spans residues 217-237 (FVHALGDVFQSTSVLISALII). Residues His219 and Asp223 each coordinate Zn(2+). The Lumenal, vesicle segment spans residues 238–245 (YFKPDYKM). The helical transmembrane segment at 246–266 (ADPVCTFISSVLALASTVMIL) threads the bilayer. At 267-368 (KDFSILLMEG…SCLLCEDPQD (102 aa)) the chain is on the cytoplasmic side. Zn(2+) contacts are provided by His300, His317, His344, Glu351, Cys360, and Cys363.

The protein belongs to the cation diffusion facilitator (CDF) transporter (TC 2.A.4) family. SLC30A subfamily. In terms of assembly, homodimer. In terms of tissue distribution, expressed in endocrine pancreatic islet alpha and beta cells. May be more abundant in beta cells than in alpha cells. Expressed in cubical epithelium lining thyroid follicles (at protein level). In the adrenal gland, detected in the cortex, but not in the medulla (at protein level).

The protein resides in the cytoplasmic vesicle. It localises to the secretory vesicle membrane. Its subcellular location is the cell membrane. It catalyses the reaction Zn(2+)(in) + 2 H(+)(out) = Zn(2+)(out) + 2 H(+)(in). In terms of biological role, proton-coupled zinc ion antiporter mediating the entry of zinc into the lumen of pancreatic beta cell secretory granules, thereby regulating insulin secretion. The polypeptide is Proton-coupled zinc antiporter SLC30A8 (Rattus norvegicus (Rat)).